Here is a 490-residue protein sequence, read N- to C-terminus: Polyamine oxidase 2 (490 aa).

FAD is bound by residues glutamate 57, arginine 65, valine 246, and glutamate 433. The short motif at 488–490 (SRL) is the Microbody targeting signal element.

Belongs to the flavin monoamine oxidase family. The cofactor is FAD. As to expression, highly expressed in flowers and siliques. Also found in leaf and stem and in low levels in cotyledons, roots and in seedlings.

It localises to the peroxisome. The enzyme catalyses spermine + O2 + H2O = 3-aminopropanal + spermidine + H2O2. It carries out the reaction N(1)-acetylspermine + O2 + H2O = 3-acetamidopropanal + spermidine + H2O2. The catalysed reaction is spermidine + O2 + H2O = 3-aminopropanal + putrescine + H2O2. It functions in the pathway amine and polyamine degradation; spermine degradation. Its pathway is amine and polyamine degradation; spermidine degradation. Flavoenzyme involved in polyamine back-conversion. Catalyzes the oxidation of the secondary amino group of polyamines, such as spermine, spermidine and their acetyl derivatives. Substrate preference is N(1)-acetylspermine &gt; spermine &gt; spermidine. Plays an important role in the regulation of polyamine intracellular concentration. Involved in abscisic acid-mediated developmental processes. May contribute to nitric oxide-mediated effects on root growth. The protein is Polyamine oxidase 2 of Arabidopsis thaliana (Mouse-ear cress).